Reading from the N-terminus, the 269-residue chain is Phosphate import ATP-binding protein PstB 2 (269 aa).

The ABC transporter domain occupies 23–264; sequence LHTEDLHVFY…PKIQATEDYV (242 aa). Residue 55 to 62 participates in ATP binding; that stretch reads GPSGCGKS.

The protein belongs to the ABC transporter superfamily. Phosphate importer (TC 3.A.1.7) family. The complex is composed of two ATP-binding proteins (PstB), two transmembrane proteins (PstC and PstA) and a solute-binding protein (PstS).

The protein localises to the cell membrane. The catalysed reaction is phosphate(out) + ATP + H2O = ADP + 2 phosphate(in) + H(+). Part of the ABC transporter complex PstSACB involved in phosphate import. Responsible for energy coupling to the transport system. This chain is Phosphate import ATP-binding protein PstB 2, found in Enterococcus faecalis (strain ATCC 700802 / V583).